The chain runs to 356 residues: Protein HEXIM1 (356 aa).

2 stretches are compositionally biased toward basic and acidic residues: residues 1 to 11 (MAEPLLTEHQH) and 24 to 47 (VHEE…DSRW). A disordered region spans residues 1-162 (MAEPLLTEHQ…RPSKKKRHWK (162 aa)). A compositionally biased stretch (polar residues) spans 48 to 58 (QSRASLQSGSR). The segment covering 84–93 (SLEKGEKGQN) has biased composition (basic and acidic residues). Serine 98 and serine 103 each carry phosphoserine. A compositionally biased stretch (basic residues) spans 145–162 (LGKKKHRRRPSKKKRHWK). A basic region; mediates nuclear localization and interaction with 7SK snRNA and NR3C1 region spans residues 147–174 (KKKHRRRPSKKKRHWKPYYKLTWEEKKK). The segment at 199 to 202 (PYNT) is interaction with P-TEFb. Residues 207-247 (MDDHDQEEPDLKTGLYPKRAAAKSDDTSDEDFVEEAGEEDG) form an autoinhibitory acidic region; in absence of 7SK snRNA interacts with the basic region preventing interaction with P-TEFb and modulating subcellular localization region. The tract at residues 210-259 (HDQEEPDLKTGLYPKRAAAKSDDTSDEDFVEEAGEEDGGSDGMGGDGSEF) is disordered. Residue serine 230 is modified to Phosphoserine. Threonine 233 is modified (phosphothreonine). Acidic residues predominate over residues 233–248 (TSDEDFVEEAGEEDGG). A phosphoserine mark is found at serine 234, serine 249, and serine 257. Positions 280 to 346 (SKQELIKEYL…LTENELHRQQ (67 aa)) form a coiled coil. A mediates interaction with CCNT1 region spans residues 283 to 311 (ELIKEYLELEKCLSRKEDENNRLRLESKR). The tract at residues 307–352 (LESKRLGGVDARVRELELELDRLRAENLQLLTENELHRQQERAPLS) is required for inhibition of ESR1-dependent transcription.

Belongs to the HEXIM family. Homooligomer and heterooligomer with HEXIM2; probably dimeric. Core component of the 7SK RNP complex, at least composed of 7SK RNA, LARP7, MEPCE, HEXIM1 (or HEXIM2) and P-TEFb (composed of CDK9 and CCNT1/cyclin-T1). Interacts with the N-CoR complex through NCOR1. Interacts with ESR1 and NR3C1. May interact with NF-kappa-B through RELA. Interacts with CCNT2; mediates formation of a tripartite complex with KPNA2. Part of the HDP-RNP complex composed of at least HEXIM1, PRKDC, XRCC5, XRCC6, paraspeckle proteins (SFPQ, NONO, PSPC1, RBM14, and MATR3) and NEAT1 non-coding RNA. Widely expressed with higher expression in heart, skeletal muscle and brain (at protein level).

It is found in the nucleus. The protein localises to the cytoplasm. Its function is as follows. Transcriptional regulator which functions as a general RNA polymerase II transcription inhibitor. Core component of the 7SK RNP complex: in cooperation with 7SK snRNA sequesters P-TEFb in a large inactive 7SK snRNP complex preventing RNA polymerase II phosphorylation and subsequent transcriptional elongation. May also regulate NF-kappa-B, ESR1, NR3C1 and CIITA-dependent transcriptional activity. Plays a role in the regulation of DNA virus-mediated innate immune response by assembling into the HDP-RNP complex, a complex that serves as a platform for IRF3 phosphorylation and subsequent innate immune response activation through the cGAS-STING pathway. This Mus musculus (Mouse) protein is Protein HEXIM1 (Hexim1).